The following is a 134-amino-acid chain: ATP synthase epsilon chain (134 aa).

Belongs to the ATPase epsilon chain family. In terms of assembly, F-type ATPases have 2 components, CF(1) - the catalytic core - and CF(0) - the membrane proton channel. CF(1) has five subunits: alpha(3), beta(3), gamma(1), delta(1), epsilon(1). CF(0) has three main subunits: a, b and c.

The protein resides in the cell membrane. In terms of biological role, produces ATP from ADP in the presence of a proton gradient across the membrane. The sequence is that of ATP synthase epsilon chain from Pelotomaculum thermopropionicum (strain DSM 13744 / JCM 10971 / SI).